Here is a 430-residue protein sequence, read N- to C-terminus: MHPSLLSPTSLGPSGSLHSPISTLSSPMNGLGSPFSVISSPMGPHSMASPGVGYGPSISPQLNSHMNSVSSSEDIKPPLGLNGVMKVPAQPSGTPLSLTKHICAICGDRSSGKHYGVYSCEGCKGFFKRTVRKDLTYTCRDNKDCVIDKRQRNRCQYCRYQKCLAMGMKREAVQEERQRAKERSENEVESTSSANEDMPVEKILEAELAVEPKTETYIETNVPMPSNSPNDPVTNICQAADKQLFTLVEWAKRIPHFSELPLDDQVILLRAGWNELLIASFSHRSIAVKDGILLATGLHVHRNSAHSAGVGAIFDRVLTELVSKMRDMQMDKTELGCLRAIVLFNPDSKGLSNPGEVEALREKVYASLEAYCKHKYPEQPGRFAKLLLRLPALRSIGLKCLEHLFFFKLIGDTPIDTFLMEMLEAPHQMT.

Residues 1-20 are compositionally biased toward low complexity; the sequence is MHPSLLSPTSLGPSGSLHSP. 2 disordered regions span residues 1–25 and 48–73; these read MHPS…STLS and ASPG…SSSE. The interval 1–99 is modulating; it reads MHPSLLSPTS…QPSGTPLSLT (99 aa). Residues 58–72 are compositionally biased toward polar residues; sequence ISPQLNSHMNSVSSS. Residues 100–175 constitute a DNA-binding region (nuclear receptor); that stretch reads KHICAICGDR…MGMKREAVQE (76 aa). Zn(2+)-binding residues include Cys103, Cys106, Cys120, and Cys123. The NR C4-type zinc-finger motif lies at 103 to 123; it reads CAICGDRSSGKHYGVYSCEGC. A nuclear localization signal region spans residues 128-133; that stretch reads KRTVRK. The Zn(2+) site is built by Cys139, Cys145, Cys155, and Cys158. Residues 139–158 form an NR C4-type zinc finger; it reads CRDNKDCVIDKRQRNRCQYC. A compositionally biased stretch (basic and acidic residues) spans 174–186; sequence QEERQRAKERSEN. Residues 174–196 are disordered; the sequence is QEERQRAKERSENEVESTSSANE. The tract at residues 176–192 is hinge; sequence ERQRAKERSENEVESTS. An NR LBD domain is found at 195–426; sequence NEDMPVEKIL…TFLMEMLEAP (232 aa). Arg284 and Ala295 together coordinate 9-cis-retinoate. The all-trans-retinoate site is built by Arg284 and Ala295. Positions 316–336 are required for nuclear export; the sequence is RVLTELVSKMRDMQMDKTELG. The interval 415–426 is AF-2; it reads IDTFLMEMLEAP.

It belongs to the nuclear hormone receptor family. NR2 subfamily. In terms of assembly, homodimer. Heterodimer; with a rar molecule. Binds DNA preferentially as a rar/rxr heterodimer.

It is found in the nucleus. In terms of biological role, receptor for retinoic acid that acts as a transcription factor. Forms homo- or heterodimers with retinoic acid receptors (rars) and binds to target response elements in response to their ligands, all-trans or 9-cis retinoic acid, to regulate gene expression in various biological processes. The rar/rxr heterodimers bind to the retinoic acid response elements (RARE) composed of tandem 5'-AGGTCA-3' sites known as DR1-DR5 to regulate transcription. The high affinity ligand for rxrs is 9-cis retinoic acid. In the absence of ligand, the rar/rxr heterodimers associate with a multiprotein complex containing transcription corepressors that induce histone deacetylation, chromatin condensation and transcriptional suppression. On ligand binding, the corepressors dissociate from the receptors and coactivators are recruited leading to transcriptional activation. The polypeptide is Retinoic acid receptor RXR-alpha-A (Danio rerio (Zebrafish)).